An 86-amino-acid polypeptide reads, in one-letter code: YcgL domain-containing protein Smlt4554 (86 aa).

The region spanning 1–85 (MHAYVYKSQL…SVASLMPRHY (85 aa)) is the YcgL domain.

The sequence is that of YcgL domain-containing protein Smlt4554 from Stenotrophomonas maltophilia (strain K279a).